A 239-amino-acid chain; its full sequence is 2,3,4,5-tetrahydropyridine-2,6-dicarboxylate N-acetyltransferase (239 aa).

It belongs to the transferase hexapeptide repeat family. DapH subfamily.

It catalyses the reaction (S)-2,3,4,5-tetrahydrodipicolinate + acetyl-CoA + H2O = L-2-acetamido-6-oxoheptanedioate + CoA. It participates in amino-acid biosynthesis; L-lysine biosynthesis via DAP pathway; LL-2,6-diaminopimelate from (S)-tetrahydrodipicolinate (acetylase route): step 1/3. Its function is as follows. Catalyzes the transfer of an acetyl group from acetyl-CoA to tetrahydrodipicolinate. The protein is 2,3,4,5-tetrahydropyridine-2,6-dicarboxylate N-acetyltransferase of Staphylococcus haemolyticus (strain JCSC1435).